The chain runs to 294 residues: Non-selective voltage-gated ion channel VDAC2 (294 aa).

Ala2 is modified (N-acetylalanine). ATP-binding residues include Lys23 and Lys31. Position 31 is an N6-acetyllysine; alternate (Lys31). Residue Lys31 is modified to N6-succinyllysine; alternate. A Glycyl lysine isopeptide (Lys-Gly) (interchain with G-Cter in ubiquitin); alternate cross-link involves residue Lys31. Transmembrane regions (beta stranded) follow at residues 37–46 and 50–58; these read LVKLDVKTKS and VEFSTSGSS. Residue Lys64 forms a Glycyl lysine isopeptide (Lys-Gly) (interchain with G-Cter in ubiquitin) linkage. The chain crosses the membrane as a beta stranded span at residues 65 to 75; that stretch reads VTGTLETKYKW. Tyr78 is subject to Phosphotyrosine. 3 beta stranded membrane-spanning segments follow: residues 80 to 87, 91 to 100, and 106 to 115; these read LTFTEKWN, TLGTEIAIED, and LKLTFDTTFS. Residue Thr118 is modified to Phosphothreonine. Lys120 is subject to N6-acetyllysine; alternate. Lys120 participates in a covalent cross-link: Glycyl lysine isopeptide (Lys-Gly) (interchain with G-Cter in ubiquitin); alternate. Residue Lys121 forms a Glycyl lysine isopeptide (Lys-Gly) (interchain with G-Cter in ubiquitin) linkage. A run of 4 beta stranded transmembrane segments spans residues 122–131, 134–141, 148–156, and 161–169; these read SGKIKSSYKR, VNLGCDVD, AIHGSAVFG, and LAGYQMTFD. Residue Lys172 forms a Glycyl lysine isopeptide (Lys-Gly) (interchain with G-Cter in ubiquitin) linkage. The next 6 beta stranded transmembrane spans lie at 174–186, 189–196, 200–209, 213–222, 229–238, and 242–249; these read KLTR…GYRT, FQLHTNVN, EFGGSIYQKV, LDTSVNLAWT, RFGIAAKYQL, and ASISAKVN. Ser251 carries the phosphoserine modification. Residues 253–255 and 271–275 each bind NAD(+); these read LIG and SALVD. 2 consecutive transmembrane segments (beta stranded) span residues 253–262 and 265–274; these read LIGVGYTQTL and GVKLTLSALV. At Lys277 the chain carries N6-acetyllysine; alternate. Lys277 participates in a covalent cross-link: Glycyl lysine isopeptide (Lys-Gly) (interchain with G-Cter in ubiquitin); alternate. The beta stranded transmembrane segment at 284–293 threads the bilayer; sequence HKLGLALELE.

It belongs to the eukaryotic mitochondrial porin family. Monomer, homodimer and higher order oligomers; formation of higher order structures is necessary for scramblase activity. Interacts with ARMC12 in a TBC1D21-dependent manner. Interacts with KLC3. Interacts with SPATA33. Interacts with PPP3CC in a SPATA33-dependent manner. Post-translationally, ubiquitinated by PRKN during mitophagy, leading to its degradation and enhancement of mitophagy. Deubiquitinated by USP30.

Its subcellular location is the mitochondrion outer membrane. The protein localises to the membrane. The catalysed reaction is chloride(in) = chloride(out). It carries out the reaction K(+)(in) = K(+)(out). It catalyses the reaction a 1,2-diacyl-sn-glycero-3-phospho-L-serine(in) = a 1,2-diacyl-sn-glycero-3-phospho-L-serine(out). The enzyme catalyses a 1,2-diacyl-sn-glycero-3-phosphocholine(in) = a 1,2-diacyl-sn-glycero-3-phosphocholine(out). The catalysed reaction is a 1,2-diacyl-sn-glycero-3-phospho-(1D-myo-inositol)(in) = a 1,2-diacyl-sn-glycero-3-phospho-(1D-myo-inositol)(out). Functionally, non-selective voltage-gated ion channel that mediates the transport of anions and cations through the mitochondrion outer membrane and plasma membrane. The channel adopts an open conformation at zero mV and a closed conformation at both positive and negative potentials. There are two populations of channels; the main that functions in a lower open-state conductance with lower ion selectivity, that switch, in a voltage-dependent manner, from the open to a low-conducting 'closed' state and the other that has a normal ion selectivity in the typical high conductance, 'open' state. Binds various lipids, including the sphingolipid ceramide, the phospholipid phosphatidylcholine, and the sterols cholesterol and oxysterol. Binding of ceramide promotes the mitochondrial outer membrane permeabilization (MOMP) apoptotic pathway. Its function is as follows. Catalyzes the scrambling of phospholipids across the outer mitochondrial membrane; the mechanism is unrelated to channel activity and is capable of translocating both anionic and zwitterionic phospholipids. The sequence is that of Non-selective voltage-gated ion channel VDAC2 from Sus scrofa (Pig).